The sequence spans 137 residues: Ribonuclease VapC51 (137 aa).

Residues 5 to 120 form the PINc domain; sequence YLLDTSVIKR…HYDADFDLIA (116 aa). Mg(2+) contacts are provided by Asp-8 and Asp-95.

Belongs to the PINc/VapC protein family. Mg(2+) is required as a cofactor.

In terms of biological role, toxic component of a type II toxin-antitoxin (TA) system. An RNase. Its cognate antitoxin is VapB51. This is Ribonuclease VapC51 from Mycobacterium tuberculosis (strain ATCC 25618 / H37Rv).